A 46-amino-acid chain; its full sequence is Photosystem II reaction center protein K (46 aa).

Residues 1 to 9 constitute a propeptide that is removed on maturation; that stretch reads MSTLPILLA. The helical transmembrane segment at 25-45 threads the bilayer; that stretch reads LPSIPVLFLLLAFVWQAAVSF.

This sequence belongs to the PsbK family. As to quaternary structure, PSII is composed of 1 copy each of membrane proteins PsbA, PsbB, PsbC, PsbD, PsbE, PsbF, PsbH, PsbI, PsbJ, PsbK, PsbL, PsbM, PsbT, PsbX, PsbY, PsbZ, Psb30/Ycf12, at least 3 peripheral proteins of the oxygen-evolving complex and a large number of cofactors. It forms dimeric complexes.

Its subcellular location is the plastid. The protein resides in the chloroplast thylakoid membrane. One of the components of the core complex of photosystem II (PSII). PSII is a light-driven water:plastoquinone oxidoreductase that uses light energy to abstract electrons from H(2)O, generating O(2) and a proton gradient subsequently used for ATP formation. It consists of a core antenna complex that captures photons, and an electron transfer chain that converts photonic excitation into a charge separation. The sequence is that of Photosystem II reaction center protein K from Nephroselmis olivacea (Green alga).